The primary structure comprises 145 residues: D-aminoacyl-tRNA deacylase (145 aa).

The short motif at 137–138 is the Gly-cisPro motif, important for rejection of L-amino acids element; sequence GP.

It belongs to the DTD family. In terms of assembly, homodimer.

It localises to the cytoplasm. It carries out the reaction glycyl-tRNA(Ala) + H2O = tRNA(Ala) + glycine + H(+). It catalyses the reaction a D-aminoacyl-tRNA + H2O = a tRNA + a D-alpha-amino acid + H(+). Functionally, an aminoacyl-tRNA editing enzyme that deacylates mischarged D-aminoacyl-tRNAs. Also deacylates mischarged glycyl-tRNA(Ala), protecting cells against glycine mischarging by AlaRS. Acts via tRNA-based rather than protein-based catalysis; rejects L-amino acids rather than detecting D-amino acids in the active site. By recycling D-aminoacyl-tRNA to D-amino acids and free tRNA molecules, this enzyme counteracts the toxicity associated with the formation of D-aminoacyl-tRNA entities in vivo and helps enforce protein L-homochirality. The sequence is that of D-aminoacyl-tRNA deacylase from Pseudomonas putida (strain W619).